The chain runs to 204 residues: Large ribosomal subunit protein uL3c (204 aa).

Positions His-126–Val-155 are disordered.

It belongs to the universal ribosomal protein uL3 family. In terms of assembly, part of the 50S ribosomal subunit.

It localises to the plastid. It is found in the chloroplast. One of the primary rRNA binding proteins, it binds directly near the 3'-end of the 23S rRNA, where it nucleates assembly of the 50S subunit. The protein is Large ribosomal subunit protein uL3c (rpl3) of Guillardia theta (Cryptophyte).